Here is a 287-residue protein sequence, read N- to C-terminus: Acetylglutamate kinase (287 aa).

Substrate is bound by residues 64–65 (GG), arginine 86, and asparagine 185.

This sequence belongs to the acetylglutamate kinase family. ArgB subfamily.

It is found in the cytoplasm. The catalysed reaction is N-acetyl-L-glutamate + ATP = N-acetyl-L-glutamyl 5-phosphate + ADP. The protein operates within amino-acid biosynthesis; L-arginine biosynthesis; N(2)-acetyl-L-ornithine from L-glutamate: step 2/4. Its function is as follows. Catalyzes the ATP-dependent phosphorylation of N-acetyl-L-glutamate. The chain is Acetylglutamate kinase from Hydrogenobaculum sp. (strain Y04AAS1).